A 576-amino-acid polypeptide reads, in one-letter code: Polypeptide N-acetylgalactosaminyltransferase 12 (576 aa).

Residues 1 to 19 (MWGRAVRRRCPRGLRRGRE) lie on the Cytoplasmic side of the membrane. A helical; Signal-anchor for type II membrane protein transmembrane segment spans residues 20–37 (ALLALLALAGLGALLRAR). The interval 38–58 (SRSGTVDPGPPRTPLPGRHEP) is disordered. Topologically, residues 38–576 (SRSGTVDPGP…QRWFFKERMS (539 aa)) are lumenal. Disulfide bonds link Cys-120–Cys-353, Cys-344–Cys-417, Cys-453–Cys-474, Cys-501–Cys-516, and Cys-542–Cys-561. A catalytic subdomain A region spans residues 130-239 (LPKTSVVIAF…EGWLEPLLQR (110 aa)). Positions 171 and 200 each coordinate substrate. Mn(2+)-binding residues include Asp-223 and His-225. Residues 299-361 (VIRSPTMAGG…PCSHVGHVFP (63 aa)) are catalytic subdomain B. Trp-330 serves as a coordination point for substrate. His-358 is a binding site for Mn(2+). Position 366 (Tyr-366) interacts with substrate. Positions 440–572 (FFGMLQNRGL…NSDNQRWFFK (133 aa)) constitute a Ricin B-type lectin domain.

This sequence belongs to the glycosyltransferase 2 family. GalNAc-T subfamily. It depends on Mn(2+) as a cofactor.

It localises to the golgi apparatus membrane. It carries out the reaction L-seryl-[protein] + UDP-N-acetyl-alpha-D-galactosamine = a 3-O-[N-acetyl-alpha-D-galactosaminyl]-L-seryl-[protein] + UDP + H(+). The enzyme catalyses L-threonyl-[protein] + UDP-N-acetyl-alpha-D-galactosamine = a 3-O-[N-acetyl-alpha-D-galactosaminyl]-L-threonyl-[protein] + UDP + H(+). Its pathway is protein modification; protein glycosylation. Its function is as follows. Catalyzes the initial reaction in O-linked oligosaccharide biosynthesis, the transfer of an N-acetyl-D-galactosamine residue to a serine or threonine residue on the protein receptor. Has activity toward non-glycosylated peptides such as Muc5AC, Muc1a and EA2, and no detectable activity with Muc2 and Muc7. Displays enzymatic activity toward the Gal-NAc-Muc5AC glycopeptide, but no detectable activity to mono-GalNAc-glycosylated Muc1a, Muc2, Muc7 and EA2. May play an important role in the initial step of mucin-type oligosaccharide biosynthesis in digestive organs. This is Polypeptide N-acetylgalactosaminyltransferase 12 (Galnt12) from Mus musculus (Mouse).